The sequence spans 111 residues: Cytochrome c6 (111 aa).

The signal sequence occupies residues 1-25; it reads MKKIFSLVLLGIALFTFAFSSPALA. Cysteine 39, cysteine 42, histidine 43, and methionine 83 together coordinate heme c.

It belongs to the cytochrome c family. PetJ subfamily. Monomer. Binds 1 heme c group covalently per subunit.

Its subcellular location is the cellular thylakoid lumen. Functionally, functions as an electron carrier between membrane-bound cytochrome b6-f and photosystem I in oxygenic photosynthesis. The protein is Cytochrome c6 (petJ) of Nostoc sp. (strain PCC 7120 / SAG 25.82 / UTEX 2576).